The following is a 183-amino-acid chain: ATP synthase subunit delta (183 aa).

The protein belongs to the ATPase delta chain family. As to quaternary structure, F-type ATPases have 2 components, F(1) - the catalytic core - and F(0) - the membrane proton channel. F(1) has five subunits: alpha(3), beta(3), gamma(1), delta(1), epsilon(1). F(0) has three main subunits: a(1), b(2) and c(10-14). The alpha and beta chains form an alternating ring which encloses part of the gamma chain. F(1) is attached to F(0) by a central stalk formed by the gamma and epsilon chains, while a peripheral stalk is formed by the delta and b chains.

Its subcellular location is the cell inner membrane. Its function is as follows. F(1)F(0) ATP synthase produces ATP from ADP in the presence of a proton or sodium gradient. F-type ATPases consist of two structural domains, F(1) containing the extramembraneous catalytic core and F(0) containing the membrane proton channel, linked together by a central stalk and a peripheral stalk. During catalysis, ATP synthesis in the catalytic domain of F(1) is coupled via a rotary mechanism of the central stalk subunits to proton translocation. This protein is part of the stalk that links CF(0) to CF(1). It either transmits conformational changes from CF(0) to CF(1) or is implicated in proton conduction. This is ATP synthase subunit delta from Verminephrobacter eiseniae (strain EF01-2).